Here is a 385-residue protein sequence, read N- to C-terminus: tRNA 2-selenouridine synthase (385 aa).

The 124-residue stretch at 15 to 138 folds into the Rhodanese domain; the sequence is FIADTPLIDV…ARQFLISTID (124 aa). Catalysis depends on cysteine 98, which acts as the S-selanylcysteine intermediate.

This sequence belongs to the SelU family. As to quaternary structure, monomer.

It catalyses the reaction 5-methylaminomethyl-2-thiouridine(34) in tRNA + selenophosphate + (2E)-geranyl diphosphate + H2O + H(+) = 5-methylaminomethyl-2-selenouridine(34) in tRNA + (2E)-thiogeraniol + phosphate + diphosphate. The catalysed reaction is 5-methylaminomethyl-2-thiouridine(34) in tRNA + (2E)-geranyl diphosphate = 5-methylaminomethyl-S-(2E)-geranyl-thiouridine(34) in tRNA + diphosphate. The enzyme catalyses 5-methylaminomethyl-S-(2E)-geranyl-thiouridine(34) in tRNA + selenophosphate + H(+) = 5-methylaminomethyl-2-(Se-phospho)selenouridine(34) in tRNA + (2E)-thiogeraniol. It carries out the reaction 5-methylaminomethyl-2-(Se-phospho)selenouridine(34) in tRNA + H2O = 5-methylaminomethyl-2-selenouridine(34) in tRNA + phosphate. Its function is as follows. Involved in the post-transcriptional modification of the uridine at the wobble position (U34) of tRNA(Lys), tRNA(Glu) and tRNA(Gln). Catalyzes the conversion of 2-thiouridine (S2U-RNA) to 2-selenouridine (Se2U-RNA). Acts in a two-step process involving geranylation of 2-thiouridine (S2U) to S-geranyl-2-thiouridine (geS2U) and subsequent selenation of the latter derivative to 2-selenouridine (Se2U) in the tRNA chain. This chain is tRNA 2-selenouridine synthase, found in Nitrosomonas europaea (strain ATCC 19718 / CIP 103999 / KCTC 2705 / NBRC 14298).